The primary structure comprises 243 residues: Sugar fermentation stimulation protein homolog (243 aa).

It belongs to the SfsA family.

This is Sugar fermentation stimulation protein homolog from Lacticaseibacillus casei (strain BL23) (Lactobacillus casei).